The sequence spans 298 residues: Tyrosine recombinase XerD (298 aa).

A Core-binding (CB) domain is found at 2-87; it reads KQDLARIEQF…AVRRLFQYLY (86 aa). Residues 108 to 292 form the Tyr recombinase domain; the sequence is RLPKDLSEAQ…ATERLRQLHQ (185 aa). Catalysis depends on residues Arg-148, Lys-172, His-244, Arg-247, and His-270. The O-(3'-phospho-DNA)-tyrosine intermediate role is filled by Tyr-279.

It belongs to the 'phage' integrase family. XerD subfamily. In terms of assembly, forms a cyclic heterotetrameric complex composed of two molecules of XerC and two molecules of XerD, in which XerC interacts with XerD via its C-terminal region, XerD interacts with XerC via its C-terminal region and so on.

It localises to the cytoplasm. Its activity is regulated as follows. FtsK may regulate the catalytic switch between XerC and XerD in the heterotetrameric complex during the two steps of the recombination process. Functionally, site-specific tyrosine recombinase, which acts by catalyzing the cutting and rejoining of the recombining DNA molecules. Binds cooperatively to specific DNA consensus sequences that are separated from XerC binding sites by a short central region, forming the heterotetrameric XerC-XerD complex that recombines DNA substrates. The complex is essential to convert dimers of the bacterial chromosome into monomers to permit their segregation at cell division. It also contributes to the segregational stability of plasmids. In the complex XerD specifically exchanges the bottom DNA strands. This Escherichia coli O157:H7 protein is Tyrosine recombinase XerD.